The sequence spans 112 residues: Protein GAST1 (112 aa).

The signal sequence occupies residues 1–25 (MAGKMSIVLFVLLVVFLTQNQVSRA).

The protein belongs to the GASA family. Six disulfide bonds may be present. All shoot organs.

The protein resides in the secreted. In Solanum lycopersicum (Tomato), this protein is Protein GAST1 (GAST1).